We begin with the raw amino-acid sequence, 473 residues long: Purple acid phosphatase 1 (473 aa).

The N-terminal stretch at 1 to 38 (MRLVVVGLWCLILGLILNPTKFCDAGVTSSYVRKSLSA) is a signal peptide. Asparagine 118 carries an N-linked (GlcNAc...) asparagine glycan. Aspartate 172 contributes to the Fe cation binding site. A glycan (N-linked (GlcNAc...) asparagine) is linked at asparagine 180. Fe cation is bound by residues aspartate 201 and tyrosine 204. Aspartate 201 is a Mn(2+) binding site. Residue asparagine 238 coordinates Mn(2+). Asparagine 238 serves as a coordination point for substrate. Residue asparagine 311 is glycosylated (N-linked (GlcNAc...) asparagine). Position 323 (histidine 323) interacts with Mn(2+). Catalysis depends on histidine 333, which acts as the Proton donor. Histidine 360 is a binding site for Mn(2+). Position 360 to 362 (360 to 362 (HVH)) interacts with substrate. Histidine 362 serves as a coordination point for Fe cation. Asparagine 433 is a glycosylation site (N-linked (GlcNAc...) asparagine).

This sequence belongs to the metallophosphoesterase superfamily. Purple acid phosphatase family. In terms of assembly, homodimer; disulfide-linked. Fe cation is required as a cofactor. The cofactor is Mn(2+). Requires Zn(2+) as cofactor. Cu(2+) serves as cofactor. It depends on Mg(2+) as a cofactor.

The protein localises to the secreted. The catalysed reaction is a phosphate monoester + H2O = an alcohol + phosphate. The protein is Purple acid phosphatase 1 (PAP1) of Ipomoea batatas (Sweet potato).